Reading from the N-terminus, the 378-residue chain is Probable 3-hydroxyisobutyryl-CoA hydrolase 3 (378 aa).

2 residues coordinate substrate: Glu-138 and Asp-146.

This sequence belongs to the enoyl-CoA hydratase/isomerase family.

Its subcellular location is the peroxisome. The enzyme catalyses 3-hydroxy-2-methylpropanoyl-CoA + H2O = 3-hydroxy-2-methylpropanoate + CoA + H(+). The protein operates within amino-acid degradation; L-valine degradation. Functionally, involved in valine catabolism. The chain is Probable 3-hydroxyisobutyryl-CoA hydrolase 3 from Arabidopsis thaliana (Mouse-ear cress).